Here is a 548-residue protein sequence, read N- to C-terminus: T-complex protein 1 subunit theta (548 aa).

The residue at position 2 (Ala-2) is an N-acetylalanine. Phosphoserine is present on Ser-23. Tyr-30 carries the phosphotyrosine modification. The ADP site is built by Tyr-47 and Gly-48. Mg(2+) is bound at residue Asp-99. Residues Gly-100, Thr-101, Asn-102, and Phe-103 each coordinate ADP. ATP is bound by residues Gly-100, Thr-101, and Asn-102. Ser-162 bears the Phosphoserine mark. Positions 169, 170, and 171 each coordinate ADP. ATP contacts are provided by Ser-170 and Lys-171. Residues Lys-224, Lys-254, and Lys-260 each participate in a glycyl lysine isopeptide (Lys-Gly) (interchain with G-Cter in SUMO2) cross-link. Residues Ser-269 and Ser-317 each carry the phosphoserine modification. Residues Lys-318 and Lys-400 each carry the N6-acetyllysine modification. Gly-412 is a binding site for ADP. Gly-412 serves as a coordination point for ATP. Lys-459 participates in a covalent cross-link: Glycyl lysine isopeptide (Lys-Gly) (interchain with G-Cter in SUMO1). N6-acetyllysine is present on Lys-466. Asp-499 provides a ligand contact to ADP. Positions 499 and 504 each coordinate ATP. Tyr-505 is subject to Phosphotyrosine. The interval 529–548 (PAGGPKPPSGKKDWDEDQND) is disordered. Residue Lys-534 forms a Glycyl lysine isopeptide (Lys-Gly) (interchain with G-Cter in SUMO2) linkage. Residue Ser-537 is modified to Phosphoserine. A Glycyl lysine isopeptide (Lys-Gly) (interchain with G-Cter in SUMO2) cross-link involves residue Lys-539.

This sequence belongs to the TCP-1 chaperonin family. As to quaternary structure, component of the chaperonin-containing T-complex (TRiC), a hexadecamer composed of two identical back-to-back stacked rings enclosing a protein folding chamber. Each ring is made up of eight different subunits: TCP1/CCT1, CCT2, CCT3, CCT4, CCT5, CCT6A/CCT6, CCT7, CCT8. Interacts with PACRG. Interacts with DNAAF4. Interacts with synaptic plasticity regulator PANTS.

It is found in the cytoplasm. It localises to the cytoskeleton. Its subcellular location is the microtubule organizing center. The protein resides in the centrosome. The protein localises to the cilium basal body. The enzyme catalyses ATP + H2O = ADP + phosphate + H(+). Component of the chaperonin-containing T-complex (TRiC), a molecular chaperone complex that assists the folding of actin, tubulin and other proteins upon ATP hydrolysis. The TRiC complex mediates the folding of WRAP53/TCAB1, thereby regulating telomere maintenance. As part of the TRiC complex may play a role in the assembly of BBSome, a complex involved in ciliogenesis regulating transports vesicles to the cilia. The polypeptide is T-complex protein 1 subunit theta (CCT8) (Bos taurus (Bovine)).